Consider the following 212-residue polypeptide: Acyl-homoserine-lactone synthase (212 aa).

It belongs to the autoinducer synthase family.

It catalyses the reaction a fatty acyl-[ACP] + S-adenosyl-L-methionine = an N-acyl-L-homoserine lactone + S-methyl-5'-thioadenosine + holo-[ACP] + H(+). In terms of biological role, required for the synthesis of OHHL (N-(3-oxohexanoyl)-L-homoserine lactone), an autoinducer molecule which binds to TraR and thus acts in the control of conjugal transfer. The chain is Acyl-homoserine-lactone synthase (traI) from Rhizobium radiobacter (Agrobacterium tumefaciens).